The primary structure comprises 238 residues: Ribosomal RNA small subunit methyltransferase G (238 aa).

S-adenosyl-L-methionine-binding positions include G75, L80, 126-127, and R142; that span reads AE.

The protein belongs to the methyltransferase superfamily. RNA methyltransferase RsmG family.

The protein resides in the cytoplasm. Its function is as follows. Specifically methylates the N7 position of guanine in position 518 of 16S rRNA. The chain is Ribosomal RNA small subunit methyltransferase G from Streptomyces avermitilis (strain ATCC 31267 / DSM 46492 / JCM 5070 / NBRC 14893 / NCIMB 12804 / NRRL 8165 / MA-4680).